The following is a 778-amino-acid chain: Serine/threonine-protein kinase BRSK1 (778 aa).

Residues 1–12 (MSSGSKEGGGGS) show a composition bias toward gly residues. The tract at residues 1–29 (MSSGSKEGGGGSPAYHLPHPHPHPPQHAQ) is disordered. Residues 34–285 (YRLEKTLGKG…LEQIQKHPWY (252 aa)) enclose the Protein kinase domain. ATP is bound by residues 40 to 48 (LGKGQTGLV) and K63. Residue D156 is the Proton acceptor of the active site. Phosphothreonine; by LKB1 is present on T189. Residue S193 is modified to Phosphoserine. The UBA domain maps to 314–356 (ELDPDVLESMASLGCFRDRERLHRELRSEEENQEKMIYYLLLD). The span at 362-383 (PSCEDQDLPPRNDVDPPRKRVD) shows a compositional bias: basic and acidic residues. The interval 362-548 (PSCEDQDLPP…SPGGGVGGAA (187 aa)) is disordered. A phosphoserine mark is found at S399, S443, S447, and S450. The segment covering 430 to 457 (SRSVSGASTGLSSSPLSSPRSPVFSFSP) has biased composition (low complexity). R466, R481, R484, and R498 each carry omega-N-methylarginine. Positions 491–508 (QPPPPSARSTPLPGPPGS) are enriched in pro residues. Residue S508 is modified to Phosphoserine. Over residues 509-533 (PRSSGGTPLHSPLHTPRASPTGTPG) the composition is skewed to low complexity. Position 525 is an omega-N-methylarginine (R525). Phosphothreonine occurs at positions 529 and 535. Position 550 is an omega-N-methylarginine (R550). T583 is modified (phosphothreonine). A phosphoserine mark is found at S586, S587, and S601. The disordered stretch occupies residues 719–778 (QPSVQALADEKNGAQTRPAGTPPRSLQPPPGRPDPDLSSSPRRGPSKDKKLLATNGTPLP).

It belongs to the protein kinase superfamily. CAMK Ser/Thr protein kinase family. SNF1 subfamily. The cofactor is Mg(2+). Post-translationally, phosphorylated at Thr-189 by STK11/LKB1 in complex with STE20-related adapter-alpha (STRADA) pseudo kinase and CAB39. Not phosphorylated at Thr-189 by CaMKK2. In contrast, it is phosphorylated and activated by CaMKK1. May be inactivated via dephosphorylation of Thr-189 by PP2C. May be autophosphorylated. As to expression, mainly present in brain. Present in presynaptic nerve terminals (at protein level).

It is found in the cytoplasm. Its subcellular location is the nucleus. The protein localises to the cytoskeleton. The protein resides in the microtubule organizing center. It localises to the centrosome. It is found in the synapse. Its subcellular location is the presynaptic active zone. The protein localises to the cytoplasmic vesicle. The protein resides in the secretory vesicle. It localises to the synaptic vesicle. It catalyses the reaction L-seryl-[protein] + ATP = O-phospho-L-seryl-[protein] + ADP + H(+). The catalysed reaction is L-threonyl-[protein] + ATP = O-phospho-L-threonyl-[protein] + ADP + H(+). The enzyme catalyses L-seryl-[tau protein] + ATP = O-phospho-L-seryl-[tau protein] + ADP + H(+). It carries out the reaction L-threonyl-[tau protein] + ATP = O-phospho-L-threonyl-[tau protein] + ADP + H(+). Activated by phosphorylation on Thr-189 by STK11/LKB1. Its function is as follows. Serine/threonine-protein kinase that plays a key role in polarization of neurons and centrosome duplication. Phosphorylates CDC25B, CDC25C, MAPT/TAU, RIMS1, TUBG1, TUBG2 and WEE1. Following phosphorylation and activation by STK11/LKB1, acts as a key regulator of polarization of cortical neurons, probably by mediating phosphorylation of microtubule-associated proteins such as MAPT/TAU at 'Thr-523' and 'Ser-573'. Also regulates neuron polarization by mediating phosphorylation of WEE1 at 'Ser-642' in postmitotic neurons, leading to down-regulate WEE1 activity in polarized neurons. Also acts as a positive regulator of centrosome duplication by mediating phosphorylation of gamma-tubulin (TUBG1 and TUBG2) at 'Ser-131', leading to translocation of gamma-tubulin and its associated proteins to the centrosome. Involved in the UV-induced DNA damage checkpoint response, probably by inhibiting CDK1 activity through phosphorylation and activation of WEE1, and inhibition of CDC25B and CDC25C. In neurons, localizes to synaptic vesicles and plays a role in neurotransmitter release, possibly by phosphorylating RIMS1. In Rattus norvegicus (Rat), this protein is Serine/threonine-protein kinase BRSK1 (Brsk1).